Here is a 61-residue protein sequence, read N- to C-terminus: NLLQFNKMIKIMTKKNAFPFYTSYGCYCGWGGRCCFVHDCCYEKTDIYSYSWKRQICECDR.

3 residues coordinate Ca(2+): tyrosine 27, glycine 29, and glycine 31. Cysteine 28 and cysteine 35 are oxidised to a cystine. Histidine 38 is an active-site residue. Aspartate 39 serves as a coordination point for Ca(2+). A disulfide bridge links cysteine 41 with cysteine 59. The active site involves aspartate 60.

It belongs to the phospholipase A2 family. Group II subfamily. D49 sub-subfamily. As to quaternary structure, homodimer. Ca(2+) serves as cofactor. In terms of tissue distribution, expressed by the venom gland.

Its subcellular location is the secreted. It catalyses the reaction a 1,2-diacyl-sn-glycero-3-phosphocholine + H2O = a 1-acyl-sn-glycero-3-phosphocholine + a fatty acid + H(+). Functionally, snake venom phospholipase A2 (PLA2) that displays edema-inducing activities. PLA2 catalyzes the calcium-dependent hydrolysis of the 2-acyl groups in 3-sn-phosphoglycerides. In Crotalus atrox (Western diamondback rattlesnake), this protein is Phospholipase A2.